The primary structure comprises 367 residues: 2-aminoethylphosphonate--pyruvate transaminase (367 aa).

Lysine 193 is subject to N6-(pyridoxal phosphate)lysine.

Belongs to the class-V pyridoxal-phosphate-dependent aminotransferase family. PhnW subfamily. In terms of assembly, homodimer. It depends on pyridoxal 5'-phosphate as a cofactor.

It carries out the reaction (2-aminoethyl)phosphonate + pyruvate = phosphonoacetaldehyde + L-alanine. Functionally, involved in phosphonate degradation. This Vibrio vulnificus (strain YJ016) protein is 2-aminoethylphosphonate--pyruvate transaminase.